The sequence spans 95 residues: Protein TusB (95 aa).

It belongs to the DsrH/TusB family. As to quaternary structure, heterohexamer, formed by a dimer of trimers. The hexameric TusBCD complex contains 2 copies each of TusB, TusC and TusD. The TusBCD complex interacts with TusE.

The protein localises to the cytoplasm. In terms of biological role, part of a sulfur-relay system required for 2-thiolation of 5-methylaminomethyl-2-thiouridine (mnm(5)s(2)U) at tRNA wobble positions. The polypeptide is Protein TusB (Buchnera aphidicola subsp. Baizongia pistaciae (strain Bp)).